The following is a 562-amino-acid chain: MSDQVVHSFRWTQSLRRGLSNWTCPVKADVLNDTRALLSGLDFAKVASVQRMMRRDKRDESDLTSLRDLNKEVDSLMTMKSTQKNMFLKVGSLSKGELMELSGDLNKLKDKVQRTERPPGSGGQYQGNLTTTQLTRRGELLQFIGIQKAGRVGMNGVVKVWDVKDSSLMINQFGSMPALTISCMAEQGGETLNDVVQGLTDLGLLYTAKYPNLNDLEALSEKHPCLKVITQEESQINISGYNLSLSAAVKAGACLIDGGNMLETIKIDTSTFTTVIKTLLEVKARERMFVSSVPGQRNPYENILYKLCLSGEGWPYIASRSQIKGRAWDNTVVEFDSAPPRAPVPVRNGGAPLLGPLRPELEDQVRKGVEGLSPNLTTWIDIEGPPNDPVELAIYQPETQKYLHCYRRPNDIKSFKDQSKYCHGILLKDVENARPGLISTIIRYLPKSMVFTAQGEDDIKRLFDMHGRQDLKIVDVKLSAEQSRVFEELVWKKFEHLCDRHKGIVIKSKKKGSKPASTNAHCALMDCIMFNAVLVGFVADEKPKRLLPIDILFREPDTTVVL.

The binding site for the cap structure m7GTP stretch occupies residues 53 to 238 (MRRDKRDESD…ITQEESQINI (186 aa)). Mn(2+)-binding residues include D381 and E383. 4 residues coordinate Zn(2+): E391, C498, H501, and C522. Residue D526 participates in Mn(2+) binding.

It belongs to the arenaviridae nucleocapsid protein family. In terms of assembly, homomultimerizes to form the nucleocapsid. Binds to viral genomic RNA. Interacts with glycoprotein G2. Interacts with protein Z; this interaction probably directs the encapsidated genome to budding sites. Interacts with protein L; this interaction does not interfere with Z-L interaction. Interacts with host IKBKE (via Protein kinase domain); the interaction inhibits IKBKE kinase activity.

It localises to the virion. The protein localises to the host cytoplasm. In terms of biological role, encapsidates the genome, protecting it from nucleases. The encapsidated genomic RNA is termed the nucleocapsid (NC). Serves as template for viral transcription and replication. The increased presence of protein N in host cell does not seem to trigger the switch from transcription to replication as observed in other negative strain RNA viruses. Through the interaction with host IKBKE, strongly inhibits the phosphorylation and nuclear translocation of host IRF3, a protein involved in interferon activation pathway, leading to the inhibition of interferon-beta and IRF3-dependent promoters activation. Also encodes a functional 3'-5' exoribonuclease that degrades preferentially dsRNA substrates and thereby participates in the suppression of interferon induction. The protein is Nucleoprotein of Bear Canyon mammarenavirus (isolate Mouse/United States/AV A0070039/2000) (BCNV).